We begin with the raw amino-acid sequence, 350 residues long: S-adenosylmethionine:tRNA ribosyltransferase-isomerase (350 aa).

The protein belongs to the QueA family. Monomer.

The protein resides in the cytoplasm. It catalyses the reaction 7-aminomethyl-7-carbaguanosine(34) in tRNA + S-adenosyl-L-methionine = epoxyqueuosine(34) in tRNA + adenine + L-methionine + 2 H(+). The protein operates within tRNA modification; tRNA-queuosine biosynthesis. Functionally, transfers and isomerizes the ribose moiety from AdoMet to the 7-aminomethyl group of 7-deazaguanine (preQ1-tRNA) to give epoxyqueuosine (oQ-tRNA). The chain is S-adenosylmethionine:tRNA ribosyltransferase-isomerase from Saccharophagus degradans (strain 2-40 / ATCC 43961 / DSM 17024).